A 541-amino-acid chain; its full sequence is Phosphoenolpyruvate carboxykinase (ATP) (541 aa).

243–250 (GLSGTGKT) contributes to the ATP binding site.

It belongs to the phosphoenolpyruvate carboxykinase (ATP) family.

The catalysed reaction is oxaloacetate + ATP = phosphoenolpyruvate + ADP + CO2. It functions in the pathway carbohydrate biosynthesis; gluconeogenesis. This chain is Phosphoenolpyruvate carboxykinase (ATP) (PCK1), found in Eremothecium gossypii (strain ATCC 10895 / CBS 109.51 / FGSC 9923 / NRRL Y-1056) (Yeast).